We begin with the raw amino-acid sequence, 194 residues long: Protein GrpE (194 aa).

The span at 1–13 (MENTQENPTSQNP) shows a compositional bias: polar residues. Residues 1-50 (MENTQENPTSQNPKPAEETARQAAEAAAPQQEAAANAATDSPASAEQAAL) are disordered. Residues 21 to 50 (RQAAEAAAPQQEAAANAATDSPASAEQAAL) are compositionally biased toward low complexity.

Belongs to the GrpE family. As to quaternary structure, homodimer.

Its subcellular location is the cytoplasm. Participates actively in the response to hyperosmotic and heat shock by preventing the aggregation of stress-denatured proteins, in association with DnaK and GrpE. It is the nucleotide exchange factor for DnaK and may function as a thermosensor. Unfolded proteins bind initially to DnaJ; upon interaction with the DnaJ-bound protein, DnaK hydrolyzes its bound ATP, resulting in the formation of a stable complex. GrpE releases ADP from DnaK; ATP binding to DnaK triggers the release of the substrate protein, thus completing the reaction cycle. Several rounds of ATP-dependent interactions between DnaJ, DnaK and GrpE are required for fully efficient folding. The polypeptide is Protein GrpE (Paraburkholderia xenovorans (strain LB400)).